A 498-amino-acid chain; its full sequence is Cytotardin (498 aa).

Residues 18-58 (DRVHSKDELQALNTRLAKYIDKIRNLENENVALQRQLQTAE) form a coil 1A region. The IF rod domain occupies 22–378 (SKDELQALNT…KLLSGEEQRL (357 aa)). Positions 59-69 (QTTVTEIHRVS) are linker 1. The coil 1B stretch occupies residues 70 to 213 (KNYDEELAKL…ENLREEKSQR (144 aa)). The interval 214–231 (QYLLHDLQRGLQDEFESK) is linker 2. The interval 232 to 371 (LVQQLNELRA…AELATYNKLL (140 aa)) is coil 2. Residues 381–425 (DGSGTVIRRPTGGATGTGSGIYGGTGSGGYSRDIGSTTTTKTTYT) form a disordered region. The span at 393 to 409 (GATGTGSGIYGGTGSGG) shows a compositional bias: gly residues.

Belongs to the intermediate filament family.

It localises to the cytoplasm. Its subcellular location is the cell cortex. Intermediate filament (IF) protein that forms both short filaments and extensive cytoskeletal networks which most likely are homomeric. Some of the cytotardin arrays display cage-like perinuclear structures, while others are located in the periphery close to the cell membrane. The entire tardigrade body is ensheathed by a grid of belt-like filaments formed by the cytotardin protein, which retain their integrity even in contracted specimens. The belt-like structures encircling each epidermal cell might help to resist the shearing forces that arise during freezing and thawing cycles, whereas the dense meshwork at the basis of each claw and around the stylets might provide the tissue stability necessary for locomotion and feeding. This is Cytotardin from Hypsibius exemplaris (Freshwater tardigrade).